A 123-amino-acid chain; its full sequence is Small ribosomal subunit protein uS13 (123 aa).

A disordered region spans residues 97-123; sequence PVRGQRTHTNAKTRKGRSRLPVAAKKK.

It belongs to the universal ribosomal protein uS13 family. As to quaternary structure, part of the 30S ribosomal subunit. Forms a loose heterodimer with protein S19. Forms two bridges to the 50S subunit in the 70S ribosome.

In terms of biological role, located at the top of the head of the 30S subunit, it contacts several helices of the 16S rRNA. In the 70S ribosome it contacts the 23S rRNA (bridge B1a) and protein L5 of the 50S subunit (bridge B1b), connecting the 2 subunits; these bridges are implicated in subunit movement. Contacts the tRNAs in the A and P-sites. The chain is Small ribosomal subunit protein uS13 from Ehrlichia ruminantium (strain Gardel).